A 92-amino-acid polypeptide reads, in one-letter code: Protein RESPONSE TO LOW SULFUR 4 (92 aa).

Residues 8–63 (VMVAASEVEELRQKNGEMEKAVEEMRKEMLQLWRRTQVAEEAEEHLCSQLAELEAE) are a coiled coil.

In terms of biological role, required for flower development in short-day conditions. The polypeptide is Protein RESPONSE TO LOW SULFUR 4 (Arabidopsis thaliana (Mouse-ear cress)).